Here is a 122-residue protein sequence, read N- to C-terminus: Large ribosomal subunit protein bL12 (122 aa).

Belongs to the bacterial ribosomal protein bL12 family. Homodimer. Part of the ribosomal stalk of the 50S ribosomal subunit. Forms a multimeric L10(L12)X complex, where L10 forms an elongated spine to which 2 to 4 L12 dimers bind in a sequential fashion. Binds GTP-bound translation factors.

In terms of biological role, forms part of the ribosomal stalk which helps the ribosome interact with GTP-bound translation factors. Is thus essential for accurate translation. This Streptococcus sanguinis (strain SK36) protein is Large ribosomal subunit protein bL12.